Reading from the N-terminus, the 230-residue chain is Protein CWC15 homolog B (230 aa).

A disordered region spans residues 1-126 (MTTAARPTFE…DEDSDDDTAA (126 aa)). Positions 22–34 (DLSQLSKQYSSRD) are enriched in polar residues. A compositionally biased stretch (basic and acidic residues) spans 52 to 84 (EEVRSRDFRRELEERERVAVRDKNRDRPTREHT). A compositionally biased stretch (acidic residues) spans 102–124 (DADDPLTDEDADEDSDEDSDDDT). The stretch at 121-165 (DDDTAALLAELEKIKKERAEEQVRKELEQKAEEERIRMENILSGN) forms a coiled coil.

It belongs to the CWC15 family. Identified in the spliceosome C complex. Component of the minor spliceosome, which splices U12-type introns.

Its subcellular location is the nucleus. In terms of biological role, involved in pre-mRNA splicing as component of the spliceosome. This Xenopus laevis (African clawed frog) protein is Protein CWC15 homolog B (cwc15-b).